The sequence spans 270 residues: uncharacterized protein (270 aa).

30–55 contributes to the NADP(+) binding site; that stretch reads ATGSLGRVAARALADAGARLTLAGGN. Serine 157 provides a ligand contact to substrate. Tyrosine 171 serves as the catalytic Proton acceptor.

Belongs to the short-chain dehydrogenases/reductases (SDR) family.

This is an uncharacterized protein from Mycobacterium tuberculosis (strain CDC 1551 / Oshkosh).